The sequence spans 372 residues: MEPVPSARAELQFSLLANVSDTFPSAFPSASANASGSPGARSASSLALAIAITALYSAVCAVGLLGNVLVMFGIVRYTKLKTATNIYIFNLALADALATSTLPFQSAKYLMETWPFGELLCKAVLSIDYYNMFTSIFTLTMMSVDRYIAVCHPVKALDFRTPAKAKLINICIWVLASGVGVPIMVMAVTQPRDGAVVCTLQFPSPSWYWDTVTKICVFLFAFVVPILIITVCYGLMLLRLRSVRLLSGSKEKDRSLRRITRMVLVVVGAFVVCWAPIHIFVIVWTLVDINRRDPLVVAALHLCIALGYANSSLNPVLYAFLDENFKRCFRQLCRAPCGGQEPGSLRRPRQATARERVTACTPSDGPGGGAAA.

The Extracellular segment spans residues 1–47 (MEPVPSARAELQFSLLANVSDTFPSAFPSASANASGSPGARSASSLA). Residues asparagine 18 and asparagine 33 are each glycosylated (N-linked (GlcNAc...) asparagine). The chain crosses the membrane as a helical span at residues 48 to 75 (LAIAITALYSAVCAVGLLGNVLVMFGIV). Over 76–85 (RYTKLKTATN) the chain is Cytoplasmic. A helical membrane pass occupies residues 86-110 (IYIFNLALADALATSTLPFQSAKYL). The Extracellular segment spans residues 111–122 (METWPFGELLCK). A disulfide bridge connects residues cysteine 121 and cysteine 198. A helical transmembrane segment spans residues 123 to 144 (AVLSIDYYNMFTSIFTLTMMSV). Topologically, residues 145–163 (DRYIAVCHPVKALDFRTPA) are cytoplasmic. The helical transmembrane segment at 164-186 (KAKLINICIWVLASGVGVPIMVM) threads the bilayer. Topologically, residues 187–206 (AVTQPRDGAVVCTLQFPSPS) are extracellular. Residues 207–238 (WYWDTVTKICVFLFAFVVPILIITVCYGLMLL) traverse the membrane as a helical segment. The Cytoplasmic segment spans residues 239–261 (RLRSVRLLSGSKEKDRSLRRITR). A helical membrane pass occupies residues 262 to 284 (MVLVVVGAFVVCWAPIHIFVIVW). At 285-299 (TLVDINRRDPLVVAA) the chain is on the extracellular side. Residues 300 to 321 (LHLCIALGYANSSLNPVLYAFL) traverse the membrane as a helical segment. At 322-372 (DENFKRCFRQLCRAPCGGQEPGSLRRPRQATARERVTACTPSDGPGGGAAA) the chain is on the cytoplasmic side. Cysteine 333 carries S-palmitoyl cysteine lipidation. Residues 340-372 (QEPGSLRRPRQATARERVTACTPSDGPGGGAAA) are disordered.

The protein belongs to the G-protein coupled receptor 1 family. As to quaternary structure, may form homooligomers. Forms a heterodimer with OPRM1. Interacts with GPRASP1. Interacts with RTP4; the interaction promotes cell surface localization of the OPRD1-OPRM1 heterodimer. In terms of processing, ubiquitinated. A basal ubiquitination seems not to be related to degradation. Ubiquitination is increased upon formation of OPRM1:OPRD1 oligomers leading to proteasomal degradation; the ubiquitination is diminished by RTP4. As to expression, detected in brain, brain stem and brain cortex.

It localises to the cell membrane. Functionally, G-protein coupled receptor that functions as a receptor for endogenous enkephalins and for a subset of other opioids. Ligand binding causes a conformation change that triggers signaling via guanine nucleotide-binding proteins (G proteins) and modulates the activity of down-stream effectors, such as adenylate cyclase. Signaling leads to the inhibition of adenylate cyclase activity. Inhibits neurotransmitter release by reducing calcium ion currents and increasing potassium ion conductance. Plays a role in the perception of pain and in opiate-mediated analgesia. Plays a role in developing analgesic tolerance to morphine. In Rattus norvegicus (Rat), this protein is Delta-type opioid receptor (Oprd1).